Reading from the N-terminus, the 539-residue chain is Phosphoenolpyruvate carboxykinase (ATP) (539 aa).

3 residues coordinate substrate: R64, Y206, and K212. ATP is bound by residues K212, H231, and 247–255 (GLSGTGKTT). Mn(2+) is bound by residues K212 and H231. Position 268 (D268) interacts with Mn(2+). Residues E296, R332, 448-449 (RI), and T454 each bind ATP. R332 is a substrate binding site.

The protein belongs to the phosphoenolpyruvate carboxykinase (ATP) family. As to quaternary structure, monomer. It depends on Mn(2+) as a cofactor.

It is found in the cytoplasm. The catalysed reaction is oxaloacetate + ATP = phosphoenolpyruvate + ADP + CO2. It participates in carbohydrate biosynthesis; gluconeogenesis. Functionally, involved in the gluconeogenesis. Catalyzes the conversion of oxaloacetate (OAA) to phosphoenolpyruvate (PEP) through direct phosphoryl transfer between the nucleoside triphosphate and OAA. The chain is Phosphoenolpyruvate carboxykinase (ATP) from Salmonella arizonae (strain ATCC BAA-731 / CDC346-86 / RSK2980).